The sequence spans 25 residues: Antimicrobial peptide 3 (25 aa).

As to expression, skin.

The protein resides in the secreted. Has antibacterial activity against Gram-positive bacterium S.aureus and Gram-negative bacterium E.coli, when in combination with XT1 and XT6. The protein is Antimicrobial peptide 3 of Xenopus tropicalis (Western clawed frog).